Reading from the N-terminus, the 161-residue chain is Probable chemoreceptor glutamine deamidase CheD (161 aa).

It belongs to the CheD family.

It carries out the reaction L-glutaminyl-[protein] + H2O = L-glutamyl-[protein] + NH4(+). Probably deamidates glutamine residues to glutamate on methyl-accepting chemotaxis receptors (MCPs), playing an important role in chemotaxis. In Thermococcus kodakarensis (strain ATCC BAA-918 / JCM 12380 / KOD1) (Pyrococcus kodakaraensis (strain KOD1)), this protein is Probable chemoreceptor glutamine deamidase CheD.